The primary structure comprises 379 residues: Deoxyguanosinetriphosphate triphosphohydrolase-like protein (379 aa).

Positions 69–200 (RLTHTIEVAQ…ANLADEIAYS (132 aa)) constitute an HD domain.

Belongs to the dGTPase family. Type 2 subfamily.

This chain is Deoxyguanosinetriphosphate triphosphohydrolase-like protein, found in Azoarcus sp. (strain BH72).